The chain runs to 430 residues: 3-deoxy-D-manno-octulosonic acid transferase (430 aa).

Residues 12-32 (AFLVAAFLAAAPRIFYKVVFH) form a helical; Signal-anchor membrane-spanning segment. The Proton acceptor role is filled by Glu66. Residues 274–275 (PR), 314–316 (MGI), and 341–344 (NLLE) contribute to the CMP site.

The protein belongs to the glycosyltransferase group 1 family. Glycosyltransferase 30 subfamily.

It localises to the cell inner membrane. The enzyme catalyses lipid IVA (E. coli) + CMP-3-deoxy-beta-D-manno-octulosonate = alpha-Kdo-(2-&gt;6)-lipid IVA (E. coli) + CMP + H(+). It carries out the reaction alpha-Kdo-(2-&gt;6)-lipid IVA (E. coli) + CMP-3-deoxy-beta-D-manno-octulosonate = alpha-Kdo-(2-&gt;4)-alpha-Kdo-(2-&gt;6)-lipid IVA (E. coli) + CMP + H(+). It catalyses the reaction alpha-Kdo-(2-&gt;4)-alpha-Kdo-(2-&gt;6)-lipid IVA (E. coli) + CMP-3-deoxy-beta-D-manno-octulosonate = alpha-Kdo-(2-&gt;8)-alpha-Kdo-(2-&gt;4)-alpha-Kdo-(2-&gt;6)-lipid IVA (E. coli) + CMP + H(+). The protein operates within bacterial outer membrane biogenesis; LPS core biosynthesis. In terms of biological role, involved in lipopolysaccharide (LPS) biosynthesis. Catalyzes the transfer of three 3-deoxy-D-manno-octulosonate (Kdo) residues from CMP-Kdo to lipid IV(A), the tetraacyldisaccharide-1,4'-bisphosphate precursor of lipid A. Thus generates the genus-specific LPS epitope of Chlamydia, composed of the trisaccharide alpha-Kdo-(2-&gt;8)-alpha-Kdo-(2-&gt;4)-alpha-Kdo. The chain is 3-deoxy-D-manno-octulosonic acid transferase (waaA) from Chlamydia muridarum (strain MoPn / Nigg).